The primary structure comprises 423 residues: 58 kDa phosphoprotein (423 aa).

The span at 46–60 (KMGYEKMKSEDSTEE) shows a compositional bias: basic and acidic residues. The segment at 46 to 82 (KMGYEKMKSEDSTEEKSDEEEEDEEEEEEEEEDDDPE) is disordered. The span at 61–82 (KSDEEEEDEEEEEEEEEDDDPE) shows a compositional bias: acidic residues. 3 TPR repeats span residues 113–146 (ICKLKEEAVDLVENKKYEEALEKYNKIISFGNPS), 147–180 (AMIYTKRASILLNLKRPKACIRDCTEALNLNVDS), and 181–214 (ANAYKIRAKAYRYLGKWEFAHADMEQGQKIDYDE). A disordered region spans residues 260-301 (KKKAEKMYKENNKRENYDSDSSDSSYSEPDFSGDFPGGMPGG). Positions 264 to 276 (EKMYKENNKRENY) are enriched in basic and acidic residues. Residues 292–362 (GDFPGGMPGG…GMPGMPGGMP (71 aa)) are 19 X 3-4 AA approximate repeats. Positions 361–423 (MPDLNSPEMK…GGMMGEKPKP (63 aa)) constitute an STI1 domain.

It is found in the cytoplasm. In terms of biological role, may play a role in protein folding or protein-protein interactions. May act as a co-chaperone. This chain is 58 kDa phosphoprotein, found in Plasmodium berghei.